Here is a 297-residue protein sequence, read N- to C-terminus: 4-hydroxy-tetrahydrodipicolinate synthase (297 aa).

T50 contacts pyruvate. Residue Y139 is the Proton donor/acceptor of the active site. The Schiff-base intermediate with substrate role is filled by K167. Pyruvate is bound at residue V209.

It belongs to the DapA family. As to quaternary structure, homotetramer; dimer of dimers.

The protein localises to the cytoplasm. It catalyses the reaction L-aspartate 4-semialdehyde + pyruvate = (2S,4S)-4-hydroxy-2,3,4,5-tetrahydrodipicolinate + H2O + H(+). Its pathway is amino-acid biosynthesis; L-lysine biosynthesis via DAP pathway; (S)-tetrahydrodipicolinate from L-aspartate: step 3/4. Its function is as follows. Catalyzes the condensation of (S)-aspartate-beta-semialdehyde [(S)-ASA] and pyruvate to 4-hydroxy-tetrahydrodipicolinate (HTPA). The sequence is that of 4-hydroxy-tetrahydrodipicolinate synthase from Microcystis aeruginosa (strain NIES-843 / IAM M-2473).